We begin with the raw amino-acid sequence, 252 residues long: Ubiquinone biosynthesis O-methyltransferase (252 aa).

Positions 36, 60, 81, and 123 each coordinate S-adenosyl-L-methionine.

This sequence belongs to the methyltransferase superfamily. UbiG/COQ3 family.

It catalyses the reaction a 3-demethylubiquinol + S-adenosyl-L-methionine = a ubiquinol + S-adenosyl-L-homocysteine + H(+). It carries out the reaction a 3-(all-trans-polyprenyl)benzene-1,2-diol + S-adenosyl-L-methionine = a 2-methoxy-6-(all-trans-polyprenyl)phenol + S-adenosyl-L-homocysteine + H(+). The protein operates within cofactor biosynthesis; ubiquinone biosynthesis. O-methyltransferase that catalyzes the 2 O-methylation steps in the ubiquinone biosynthetic pathway. The protein is Ubiquinone biosynthesis O-methyltransferase of Rickettsia prowazekii (strain Madrid E).